Here is a 231-residue protein sequence, read N- to C-terminus: Small ribosomal subunit protein uS2c (231 aa).

The protein belongs to the universal ribosomal protein uS2 family.

It localises to the plastid. The protein localises to the chloroplast. The protein is Small ribosomal subunit protein uS2c (rps2) of Gracilaria tenuistipitata var. liui (Red alga).